The following is a 485-amino-acid chain: Tektin-5 (485 aa).

4 coiled-coil regions span residues 113–185, 225–251, 342–385, and 423–443; these read SRLT…EVNC, QQQM…ALER, FNAR…MAKE, and DDTL…LQLL.

Belongs to the tektin family. Microtubule inner protein component of sperm flagellar doublet microtubules. Interacts with TEKT3. In terms of processing, ubiquitinated, leading to its degradation. Deubiquitinated by USP16, promoting its stability.

It localises to the cytoplasm. The protein resides in the cytoskeleton. It is found in the flagellum axoneme. In terms of biological role, sperm-specific microtubule inner protein (MIP) part of the dynein-decorated doublet microtubules (DMTs) in flagellar axoneme. Forms an extensive interaction network in different conformations that reinforces the helix bundle composed by other tektin proteins (TEKT1 to TEKT4) and MIPs to anchor the tektin bundle onto the tubulin wall of A-tubule of the sperm flagellum. In Macaca fascicularis (Crab-eating macaque), this protein is Tektin-5 (TEKT5).